Reading from the N-terminus, the 427-residue chain is MGMTIAEKIFAAHLVDEPFHGTRVLKLDVVMCHEITTPIAIADLIARGKDRVFDTSRIKAVIDHVTPSKDSKTATQAKMLRDWARRHNIKDFFDIGANGVCHALFPEKGFIRPGYTVIMGDSHTCTHGAFGAFAAGVGTTDLEVGILKGVCAFREPKTIRINLNGKLPKGVYAKDAILHVIGRLGVNGATDRVIEFRGAVVDAMTMESRMTLCNMAIEAGGTSGICMPDSVTVDYLWPFISEDYASKEAALVEFKKWWSDEDAVYERVLDLDISGLEPVVTFGYKPDQVKTITEMAGTPVDQVYLGSCTNGRLEDLRVAAEILKGKKIAPTVRAILSPATPKVYSDALHEGLIDIFMEAGFCVTNPTCGACLGMSNGVLAEGEVCASTTNRNFMGRMGKGGMVHLMSPATSAATAIEGKMADPRKYL.

Residues C308, C368, and C371 each coordinate [4Fe-4S] cluster.

This sequence belongs to the aconitase/IPM isomerase family. LeuC type 2 subfamily. In terms of assembly, heterodimer of LeuC and LeuD. [4Fe-4S] cluster serves as cofactor.

The catalysed reaction is (2R,3S)-3-isopropylmalate = (2S)-2-isopropylmalate. Its pathway is amino-acid biosynthesis; L-leucine biosynthesis; L-leucine from 3-methyl-2-oxobutanoate: step 2/4. In terms of biological role, catalyzes the isomerization between 2-isopropylmalate and 3-isopropylmalate, via the formation of 2-isopropylmaleate. This chain is 3-isopropylmalate dehydratase large subunit, found in Geotalea uraniireducens (strain Rf4) (Geobacter uraniireducens).